Reading from the N-terminus, the 284-residue chain is D-tagatose-1,6-bisphosphate aldolase subunit GatY (284 aa).

Asp82 (proton donor) is an active-site residue. Residues His83 and His180 each contribute to the Zn(2+) site. Gly181 provides a ligand contact to dihydroxyacetone phosphate. Position 208 (His208) interacts with Zn(2+). Residues 209-211 (GAS) and 230-233 (NVAT) contribute to the dihydroxyacetone phosphate site.

Belongs to the class II fructose-bisphosphate aldolase family. TagBP aldolase GatY subfamily. Forms a complex with GatZ. Zn(2+) is required as a cofactor.

It carries out the reaction D-tagatofuranose 1,6-bisphosphate = D-glyceraldehyde 3-phosphate + dihydroxyacetone phosphate. It functions in the pathway carbohydrate metabolism; D-tagatose 6-phosphate degradation; D-glyceraldehyde 3-phosphate and glycerone phosphate from D-tagatose 6-phosphate: step 2/2. In terms of biological role, catalytic subunit of the tagatose-1,6-bisphosphate aldolase GatYZ, which catalyzes the reversible aldol condensation of dihydroxyacetone phosphate (DHAP or glycerone-phosphate) with glyceraldehyde 3-phosphate (G3P) to produce tagatose 1,6-bisphosphate (TBP). Requires GatZ subunit for full activity and stability. Is involved in the catabolism of galactitol. The chain is D-tagatose-1,6-bisphosphate aldolase subunit GatY from Salmonella newport (strain SL254).